Consider the following 201-residue polypeptide: MKNAFFVTASIACGKSTFIEIANSLGFKSISADKIAHKILDENALELEKIFSPFSLKNLLKKEKKIDRKILGEIVFNNKEAKKILENFTHPKIRAKILEQMQILDKENKAFFVEIPLFFESGAYENLGKVIVIYTPKELSLKRIMQRDKLSLEAAKARLDSQIDIEEKLKKADFIIKNTNSYADFRQECVKVIQEISKGNM.

One can recognise a DPCK domain in the interval 4–201 (AFFVTASIAC…VIQEISKGNM (198 aa)). Position 12–17 (12–17 (ACGKST)) interacts with ATP.

It belongs to the CoaE family.

Its subcellular location is the cytoplasm. The enzyme catalyses 3'-dephospho-CoA + ATP = ADP + CoA + H(+). It participates in cofactor biosynthesis; coenzyme A biosynthesis; CoA from (R)-pantothenate: step 5/5. Functionally, catalyzes the phosphorylation of the 3'-hydroxyl group of dephosphocoenzyme A to form coenzyme A. The polypeptide is Dephospho-CoA kinase (Campylobacter jejuni subsp. jejuni serotype O:2 (strain ATCC 700819 / NCTC 11168)).